A 457-amino-acid chain; its full sequence is Chromosomal replication initiator protein DnaA (457 aa).

A domain I, interacts with DnaA modulators region spans residues 1–75 (MDAQLNNLWE…ALKIVTSRKF (75 aa)). The domain II stretch occupies residues 75–118 (FKIEFYLESDLEEEKENEEKQKEEKKDNTNDVDGSIVVSDEMSA). Residues 87 to 108 (EEKENEEKQKEEKKDNTNDVDG) form a disordered region. A compositionally biased stretch (basic and acidic residues) spans 91 to 103 (NEEKQKEEKKDNT). Residues 119-335 (TLNPKYTFQS…GALIRIIAYS (217 aa)) form a domain III, AAA+ region region. Residues glycine 163, glycine 165, lysine 166, and threonine 167 each contribute to the ATP site. The domain IV, binds dsDNA stretch occupies residues 336-457 (SLTNRDVSVD…NDITKKLTQK (122 aa)).

The protein belongs to the DnaA family. As to quaternary structure, oligomerizes as a right-handed, spiral filament on DNA at oriC.

The protein resides in the cytoplasm. Plays an essential role in the initiation and regulation of chromosomal replication. ATP-DnaA binds to the origin of replication (oriC) to initiate formation of the DNA replication initiation complex once per cell cycle. Binds the DnaA box (a 9 base pair repeat at the origin) and separates the double-stranded (ds)DNA. Forms a right-handed helical filament on oriC DNA; dsDNA binds to the exterior of the filament while single-stranded (ss)DNA is stabiized in the filament's interior. The ATP-DnaA-oriC complex binds and stabilizes one strand of the AT-rich DNA unwinding element (DUE), permitting loading of DNA polymerase. After initiation quickly degrades to an ADP-DnaA complex that is not apt for DNA replication. Binds acidic phospholipids. This is Chromosomal replication initiator protein DnaA from Clostridium perfringens (strain SM101 / Type A).